A 502-amino-acid chain; its full sequence is ATP synthase subunit alpha (502 aa).

The interval 117-139 (GMGPVLTSKTRPIESPAPGVMDR) is disordered. 169 to 176 (GDRQTGKT) is a binding site for ATP.

It belongs to the ATPase alpha/beta chains family. F-type ATPases have 2 components, CF(1) - the catalytic core - and CF(0) - the membrane proton channel. CF(1) has five subunits: alpha(3), beta(3), gamma(1), delta(1), epsilon(1). CF(0) has three main subunits: a(1), b(2) and c(9-12). The alpha and beta chains form an alternating ring which encloses part of the gamma chain. CF(1) is attached to CF(0) by a central stalk formed by the gamma and epsilon chains, while a peripheral stalk is formed by the delta and b chains.

It localises to the cell membrane. The enzyme catalyses ATP + H2O + 4 H(+)(in) = ADP + phosphate + 5 H(+)(out). In terms of biological role, produces ATP from ADP in the presence of a proton gradient across the membrane. The alpha chain is a regulatory subunit. The polypeptide is ATP synthase subunit alpha (Bacillus licheniformis (strain ATCC 14580 / DSM 13 / JCM 2505 / CCUG 7422 / NBRC 12200 / NCIMB 9375 / NCTC 10341 / NRRL NRS-1264 / Gibson 46)).